We begin with the raw amino-acid sequence, 321 residues long: Gap junction delta-2 protein (321 aa).

The Cytoplasmic portion of the chain corresponds to 1 to 19 (MGEWTILERLLEAAVQQHS). A helical transmembrane segment spans residues 20 to 42 (TMIGRILLTVVVIFRILIVAIVG). The Extracellular segment spans residues 43–75 (ETVYDDEQTMFVCNTLQPGCNQACYDRAFPISH). The helical transmembrane segment at 76–98 (IRYWVFQIIMVCTPSLCFITYSV) threads the bilayer. Residues 99–197 (HQSAKQRERR…KLRRQEGISR (99 aa)) lie on the Cytoplasmic side of the membrane. The disordered stretch occupies residues 117 to 141 (DRDPPESMGGPGGTGGGGSGGGKRE). Gly residues predominate over residues 125–137 (GGPGGTGGGGSGG). A helical membrane pass occupies residues 198-220 (FYIIQVVFRNALEIGFLVGQYFL). Residues 221–252 (YGFSVPGLYECDRYPCIKEVECYVSRPTEKTV) lie on the Extracellular side of the membrane. A helical membrane pass occupies residues 253-275 (FLVFMFAVSGICVVLNLAELNHL). Topologically, residues 276-321 (GWRKIKLAVRGAQAKRKSVYEIRNKDLPRVSVPNFGRTQSSDSAYV) are cytoplasmic.

This sequence belongs to the connexin family. Delta-type subfamily. As to quaternary structure, a connexon is composed of a hexamer of connexins.

The protein localises to the cell membrane. The protein resides in the cell junction. Its subcellular location is the gap junction. In terms of biological role, one gap junction consists of a cluster of closely packed pairs of transmembrane channels, the connexons, through which materials of low MW diffuse from one cell to a neighboring cell. This is Gap junction delta-2 protein (GJD2) from Bos taurus (Bovine).